The primary structure comprises 523 residues: REST corepressor 2 (523 aa).

The interval 1–43 (MPSVMEKPSAGSGILSRSRAKTAPNGGQPHSEDDSSEEEHSHD) is disordered. The segment covering 30–43 (HSEDDSSEEEHSHD) has biased composition (basic and acidic residues). S31, S35, S36, and S63 each carry phosphoserine. In terms of domain architecture, ELM2 spans 44-129 (SMIRVGTNYQ…KSLADLANFT (86 aa)). K88 is covalently cross-linked (Glycyl lysine isopeptide (Lys-Gly) (interchain with G-Cter in SUMO2)). In terms of domain architecture, SANT 1 spans 130 to 181 (PFPDEWTVEDKVLFEQAFGFHGKCFQRIQQMLPDKLIPSLVKYYYSWKKTRS). The interval 185–265 (VMDRQARRLG…RRRPPKGMYL (81 aa)) is disordered. At S202 the chain carries Phosphoserine. A compositionally biased stretch (basic residues) spans 248–260 (YRHHPLRTRRRPP). A coiled-coil region spans residues 283–314 (TLRGLDSQLISLKRQVQSMKQTNSSLRQALEG). One can recognise an SANT 2 domain in the interval 327 to 378 (KFNSRWTTDEQLLAVQAIRRYGKDFGAIAEVIGNKTLTQVKTFFVSYRRRFN). Positions 387-523 (EAEQDGAPTA…AQLEPPAPSL (137 aa)) are disordered. Residues 432 to 459 (SVPPAPPPPPPPTSLSQPPPLLRPPLPT) show a composition bias toward pro residues. Positions 460–482 (APTLLRQPPPLQQGRFLQPRLAP) are enriched in low complexity. R479 carries the post-translational modification Asymmetric dimethylarginine.

Belongs to the CoREST family.

Its subcellular location is the nucleus. Functionally, may act as a component of a corepressor complex that represses transcription. This chain is REST corepressor 2 (Rcor2), found in Rattus norvegicus (Rat).